A 92-amino-acid polypeptide reads, in one-letter code: MTINRWHLLVSGKVQGVYYRASTEQKARELGLTGWVRNLPDGRVEIVAEGEPLQLKALHEWCHEGPERAVVDEVAAQELPATQEFTDFRTTH.

An Acylphosphatase-like domain is found at 5 to 92; the sequence is RWHLLVSGKV…QEFTDFRTTH (88 aa). Active-site residues include arginine 20 and asparagine 38.

Belongs to the acylphosphatase family.

The enzyme catalyses an acyl phosphate + H2O = a carboxylate + phosphate + H(+). This Marinobacter nauticus (strain ATCC 700491 / DSM 11845 / VT8) (Marinobacter aquaeolei) protein is Acylphosphatase (acyP).